The sequence spans 196 residues: uncharacterized protein (196 aa).

Pro residues predominate over residues 1 to 10 (MPGMVPPHVP). Disordered regions lie at residues 1–118 (MPGM…EGSG) and 176–196 (TEQAAPPVCPAPASRRLSAPG). Over residues 25 to 45 (PVAPQVPSPGGAPGQGPYPYS) the composition is skewed to low complexity. Residues 54-69 (LDTSGKNLTEQNSYSN) show a composition bias toward polar residues.

This is an uncharacterized protein from Homo sapiens (Human).